The sequence spans 657 residues: Forkhead box protein O3 (657 aa).

2 disordered regions span residues 1–71 and 216–320; these read MAEA…EGAA and SSWW…ELDD. A DNA-binding region (fork-head) is located at residues 142 to 236; sequence WGNMSYADLI…KGGKAPRRRA (95 aa). Residues 246–257 show a composition bias toward basic residues; that stretch reads TKSRGRAAKKKA. Positions 268 to 283 are enriched in polar residues; it reads DSPSQLSKWPGSPTSR. Over residues 284–296 the composition is skewed to basic and acidic residues; that stretch reads SSDKLDTWTDFRS. The segment covering 297 to 307 has biased composition (polar residues); sequence RTNSNASTISG.

Dephosphorylation may promote translocation to the nucleus where the protein induces transcription of target genes and triggers apoptosis. In terms of tissue distribution, localized to the animal hemisphere during early cleavage stages. At the late neurula, localized in the anterior neural plate, neural crest cells and in the hatching gland. As development progresses, expression becomes less localized, being observed in a variety of organs and tissues including the head, branchial arches and somites by stage 32.

It localises to the cytoplasm. Its subcellular location is the cytosol. The protein resides in the nucleus. Its function is as follows. Transcriptional activator that recognizes and binds to the DNA sequence 5'-[AG]TAAA[TC]A-3' and regulates different processes, such as apoptosis and autophagy. Acts as a positive regulator of autophagy in skeletal muscle: in starved cells, enters the nucleus following dephosphorylation and binds the promoters of autophagy genes, thereby activating their expression, resulting in proteolysis of skeletal muscle proteins. Triggers apoptosis in the absence of survival factors, including neuronal cell death upon oxidative stress. In response to metabolic stress, translocates into the mitochondria where it promotes mtDNA transcription. Also acts as a key regulator of chondrogenic commitment of skeletal progenitor cells in response to lipid availability: when lipids levels are low, translocates to the nucleus and promotes expression of sox9, which induces chondrogenic commitment and suppresses fatty acid oxidation. Also acts as a key regulator of regulatory T-cells (Treg) differentiation. The polypeptide is Forkhead box protein O3 (Xenopus laevis (African clawed frog)).